A 431-amino-acid chain; its full sequence is Histidinol dehydrogenase (431 aa).

NAD(+) is bound by residues Tyr130, Gln191, and Asn214. The substrate site is built by Ser237, Gln259, and His262. Residues Gln259 and His262 each coordinate Zn(2+). Residues Glu327 and His328 each act as proton acceptor in the active site. Residues His328, Asp361, Glu415, and His420 each contribute to the substrate site. Asp361 provides a ligand contact to Zn(2+). Residue His420 participates in Zn(2+) binding.

This sequence belongs to the histidinol dehydrogenase family. Requires Zn(2+) as cofactor.

It catalyses the reaction L-histidinol + 2 NAD(+) + H2O = L-histidine + 2 NADH + 3 H(+). Its pathway is amino-acid biosynthesis; L-histidine biosynthesis; L-histidine from 5-phospho-alpha-D-ribose 1-diphosphate: step 9/9. Functionally, catalyzes the sequential NAD-dependent oxidations of L-histidinol to L-histidinaldehyde and then to L-histidine. This is Histidinol dehydrogenase from Syntrophotalea carbinolica (strain DSM 2380 / NBRC 103641 / GraBd1) (Pelobacter carbinolicus).